Consider the following 403-residue polypeptide: S-adenosylmethionine synthase (403 aa).

Position 15 (H15) interacts with ATP. D17 provides a ligand contact to Mg(2+). E43 contacts K(+). The L-methionine site is built by E56 and Q99. The tract at residues 99 to 109 is flexible loop; that stretch reads QSPDINQGVDR. Residues 166–168, 232–233, D241, 247–248, A264, and K268 contribute to the ATP site; these read DAK, KF, and RK. D241 provides a ligand contact to L-methionine. Residue K272 participates in L-methionine binding.

This sequence belongs to the AdoMet synthase family. Homotetramer; dimer of dimers. Requires Mg(2+) as cofactor. K(+) serves as cofactor.

It is found in the cytoplasm. The enzyme catalyses L-methionine + ATP + H2O = S-adenosyl-L-methionine + phosphate + diphosphate. Its pathway is amino-acid biosynthesis; S-adenosyl-L-methionine biosynthesis; S-adenosyl-L-methionine from L-methionine: step 1/1. Its function is as follows. Catalyzes the formation of S-adenosylmethionine (AdoMet) from methionine and ATP. The overall synthetic reaction is composed of two sequential steps, AdoMet formation and the subsequent tripolyphosphate hydrolysis which occurs prior to release of AdoMet from the enzyme. This Xanthomonas campestris pv. campestris (strain 8004) protein is S-adenosylmethionine synthase.